We begin with the raw amino-acid sequence, 354 residues long: S-adenosylmethionine:tRNA ribosyltransferase-isomerase (354 aa).

Belongs to the QueA family. Monomer.

It localises to the cytoplasm. It catalyses the reaction 7-aminomethyl-7-carbaguanosine(34) in tRNA + S-adenosyl-L-methionine = epoxyqueuosine(34) in tRNA + adenine + L-methionine + 2 H(+). Its pathway is tRNA modification; tRNA-queuosine biosynthesis. In terms of biological role, transfers and isomerizes the ribose moiety from AdoMet to the 7-aminomethyl group of 7-deazaguanine (preQ1-tRNA) to give epoxyqueuosine (oQ-tRNA). This chain is S-adenosylmethionine:tRNA ribosyltransferase-isomerase, found in Salmonella paratyphi C (strain RKS4594).